Consider the following 484-residue polypeptide: Transcription factor cghD (484 aa).

Residues 21 to 54 (CDRCRLQKLKCTVQSMESDGRMVCERCVRAKVPC) constitute a DNA-binding region (zn(2)-C6 fungal-type). Disordered stretches follow at residues 59-117 (RRRA…PTLA), 136-174 (TTAP…SGSS), 202-242 (PAST…FSTT), and 386-406 (HMHS…ELPS). The segment covering 64-76 (RPSDTKKQGDSST) has biased composition (basic and acidic residues). The segment covering 77–107 (RRSTAPRTTNPEPTVLTPPLSTTSSTSEQTL) has biased composition (low complexity). Positions 202 to 213 (PASTSTSTGSPT) are enriched in low complexity.

The protein resides in the nucleus. Transcription factor that regulates the expression of the gene cluster that mediates the biosynthesis of the tetramic acid Sch210972, a potential anti-HIV fungal natural product that contains a decalin core. The sequence is that of Transcription factor cghD from Chaetomium globosum (strain ATCC 6205 / CBS 148.51 / DSM 1962 / NBRC 6347 / NRRL 1970) (Soil fungus).